The following is a 486-amino-acid chain: MTFIEGKTEKWEYVIGLEIHAQIKSNAKLFSSASTEFGSSPNSQVELLDAAMPGSLPVLNEFCVHQAIKTALGINAKINKLSIFDRKNYFYADLPAGYQISQFYHPIAQGGWIEILDENGNIKRIQINRLHIEQDTGKSTHDQSDTYSYIDLNRSGIALMEIVSEPDISSPMQAAEYIKKLRAILRYLDSCNGDMEKGSLRCDANISVRKPNSELGTKCEIKNLNSIKSIVRALEFEGQRQVNILESGGTVKQESLLFDATLGKTFPMRSKENATDYRYFPDPDLPPIILDQSLIDNIASSLPELPDAKIRRYINEIKLSDYNAQVLAADKDISCFFEEVIKTANPLLSANWILSELFGLMNKDGITINECKITANHFSELIQLISSKAISSKIAKTVLKEMFDSGKSPKIIMQEKNIQQISDPNQIADIIDDVLKDNYQSVVSYRNGKDRLFGFFVGQVMKKTAGNANPALINEILHTKLKQFQI.

It belongs to the GatB/GatE family. GatB subfamily. Heterotrimer of A, B and C subunits.

It carries out the reaction L-glutamyl-tRNA(Gln) + L-glutamine + ATP + H2O = L-glutaminyl-tRNA(Gln) + L-glutamate + ADP + phosphate + H(+). The enzyme catalyses L-aspartyl-tRNA(Asn) + L-glutamine + ATP + H2O = L-asparaginyl-tRNA(Asn) + L-glutamate + ADP + phosphate + 2 H(+). In terms of biological role, allows the formation of correctly charged Asn-tRNA(Asn) or Gln-tRNA(Gln) through the transamidation of misacylated Asp-tRNA(Asn) or Glu-tRNA(Gln) in organisms which lack either or both of asparaginyl-tRNA or glutaminyl-tRNA synthetases. The reaction takes place in the presence of glutamine and ATP through an activated phospho-Asp-tRNA(Asn) or phospho-Glu-tRNA(Gln). In Orientia tsutsugamushi (strain Ikeda) (Rickettsia tsutsugamushi), this protein is Aspartyl/glutamyl-tRNA(Asn/Gln) amidotransferase subunit B.